The primary structure comprises 778 residues: Gelsolin (778 aa).

The N-terminal stretch at 1 to 23 (MGKQGFGYIFLTIFCTMALKLNC) is a signal peptide. The segment at 49–172 (MVEHAEFSKA…YKAGGVASGF (124 aa)) is actin-severing. The stretch at 72-154 (FDLVPVPKNL…VQGHESSTFL (83 aa)) is one Gelsolin-like 1 repeat. 6 residues coordinate Ca(2+): G88, D89, E120, D132, G137, and A139. The segment at 119 to 122 (DERG) is actin-actin interfilament contact point. 158–165 (KSGIKYKA) is an a 1,2-diacyl-sn-glycero-3-phospho-(1D-myo-inositol-4,5-bisphosphate) binding site. V168 contacts Ca(2+). 184–192 (RLLQVKGRR) serves as a coordination point for a 1,2-diacyl-sn-glycero-3-phospho-(1D-myo-inositol-4,5-bisphosphate). One copy of the Gelsolin-like 2 repeat lies at 193–266 (TVRATEVPVS…SEEGAEREEM (74 aa)). Residues G209 and D210 each coordinate Ca(2+). An intrachain disulfide couples C211 to C224. E232, D282, E325, D326, E350, G467, D468, E498, D510, G515, P517, T547, N587, D588, E610, D692, D693, and E715 together coordinate Ca(2+). Gelsolin-like repeat units lie at residues 313–385 (DENP…TPLF) and 451–532 (SEKV…PHLM). The segment at 430–778 (AAQHGMEDDG…LQRAMADVDV (349 aa)) is actin-binding, Ca-sensitive. Gelsolin-like repeat units lie at residues 574–638 (AVEL…DNFW) and 677–752 (IEEV…PPTF).

Belongs to the villin/gelsolin family. As to quaternary structure, binds to actin and to fibronectin. Highly expressed in homogene cells of the basilar papilla. Also detected in subcutaneous layer of the skin.

The protein localises to the secreted. Its subcellular location is the cytoplasm. It is found in the cytoskeleton. Its function is as follows. Calcium-regulated, actin-modulating protein that binds to the plus (or barbed) ends of actin monomers or filaments, preventing monomer exchange (end-blocking or capping). It can promote the assembly of monomers into filaments (nucleation) as well as sever filaments already formed. Plays a role in ciliogenesis. The protein is Gelsolin (GSN) of Gallus gallus (Chicken).